A 376-amino-acid polypeptide reads, in one-letter code: MDVLAEANGTFALNLLKTLGKDNSKNVFFSPMSMSCALAMVYMGAKGNTAAQMAQVLSFNKSGSGGDIHQGFQSLLTEVNKTGTQYLLRTANRLFGEKSCDFLSSFRDSCQKFYQAEMEELDFISAVEKSRKHINTWVAEKTEGKIAELLSPGSVDPLTRLVLVNAVYFRGNWDEQFDKENTEERLFKVSKNEEKPVQMMFKQSTFKKTYIGEIFTQILVLPYVGKELNMIIMLPDETTDLRTVEKELTYEKFVEWTRLDMMDEEEVEVSLPRFKLEESYDMESVLRNLGMTDAFELGKADFSGMSQTDLSLSKVVHKSFVEVNEEGTEAAAATAAIMMMRCARFVPRFCADHPFLFFIQHSKTNGILFCGRFSSP.

M1 bears the N-acetylmethionine mark. The residue at position 151 (S151) is a Phosphoserine. K195 carries the post-translational modification N6-acetyllysine.

It belongs to the serpin family. Ov-serpin subfamily. As to quaternary structure, forms a complex with the monomeric form of beta-tryptase.

It localises to the cytoplasm. In terms of biological role, inhibitor of cathepsin G, kallikrein-8 and thrombin. May play an important role in the inner ear in the protection against leakage of lysosomal content during stress. May be involved in the regulation of serine proteinases present in the brain or extravasated from the blood. The sequence is that of Serpin B6 (SERPINB6) from Pongo abelii (Sumatran orangutan).